We begin with the raw amino-acid sequence, 801 residues long: Interleukin-4 receptor subunit alpha (801 aa).

Positions Met1–Gly25 are cleaved as a signal peptide. Topologically, residues Ile26–Arg232 are extracellular. Cys34 and Cys44 are oxidised to a cystine. An N-linked (GlcNAc...) asparagine glycan is attached at Asn71. A disulfide bridge connects residues Cys74 and Cys86. The Fibronectin type-III domain occupies Ala125–Asn223. Asn128, Asn134, and Asn162 each carry an N-linked (GlcNAc...) asparagine glycan. Phosphoserine is present on Ser164. Asn176 is a glycosylation site (N-linked (GlcNAc...) asparagine). A WSXWS motif motif is present at residues Trp212 to Ser216. The helical transmembrane segment at Leu233 to Ile256 threads the bilayer. Topologically, residues Lys257–Ser801 are cytoplasmic. The short motif at Trp262–Ala270 is the Box 1 motif element. Residues Val424–Gly476 form a disordered region. The span at Gln426 to Ser444 shows a compositional bias: low complexity. The interval Glu439 to Ser549 is required for IRS1 activation and IL4-induced cell growth. Over residues Pro454–Gln465 the composition is skewed to polar residues. Tyr492 carries the phosphotyrosine modification. Residues Arg493–Ala515 are disordered. A required for IL4-induced gene expression region spans residues Ser549 to Leu644. Residues Tyr566, Tyr594, and Tyr622 each carry the phosphotyrosine modification. The ITIM motif signature appears at Ile698–Leu703. Residues Arg767–Ser801 are disordered.

The protein belongs to the type I cytokine receptor family. Type 4 subfamily. In terms of assembly, the functional IL4 receptor is formed by initial binding of IL4 to IL4R. Subsequent recruitment to the complex of the common gamma chain, in immune cells, creates a type I receptor and, in non-immune cells, of IL13RA1 forms a type II receptor. IL4R can also interact with the IL13/IL13RA1 complex to form a similar type II receptor. Interacts with PIK3C3. Interacts with the SH2-containing phosphatases, PTPN6/SHIP1, PTPN11/SHIP2 and INPP5D/SHIP. Interacts with JAK1 through a Box 1-containing region; inhibited by SOCS5. Interacts with SOCS5; inhibits IL4 signaling. Interacts with JAK3. Interacts with CLM1. Interacts with IL13RA2. In terms of processing, on IL4 binding, phosphorylated on C-terminal tyrosine residues. Isoform 2 is expressed in kidney, spleen, lung and liver.

The protein localises to the cell membrane. Its subcellular location is the secreted. Functionally, receptor for both interleukin 4 and interleukin 13. Couples to the JAK1/2/3-STAT6 pathway. The IL4 response is involved in promoting Th2 differentiation. The IL4/IL13 responses are involved in regulating IgE production and, chemokine and mucus production at sites of allergic inflammation. In certain cell types, can signal through activation of insulin receptor substrates, IRS1/IRS2. Isoform 2 (soluble form) inhibits IL4-induced spleen cell proliferation. This Rattus norvegicus (Rat) protein is Interleukin-4 receptor subunit alpha (Il4r).